The following is a 509-amino-acid chain: Probable cytochrome P450 6a14 (509 aa).

Residue C454 participates in heme binding.

Belongs to the cytochrome P450 family. Heme is required as a cofactor.

It is found in the endoplasmic reticulum membrane. It localises to the microsome membrane. In terms of biological role, may be involved in the metabolism of insect hormones and in the breakdown of synthetic insecticides. The protein is Probable cytochrome P450 6a14 (Cyp6a14) of Drosophila melanogaster (Fruit fly).